Reading from the N-terminus, the 135-residue chain is UPF0355 protein SE_2351 (135 aa).

This sequence belongs to the UPF0355 family.

The chain is UPF0355 protein SE_2351 from Staphylococcus epidermidis (strain ATCC 12228 / FDA PCI 1200).